Here is a 226-residue protein sequence, read N- to C-terminus: MALTDIDVQKQIKHMMAFIEQEANEKAEEIDAKAEEEFNIEKGRLVQTQRLKIMDYFEKKEKQIEQQKKIQLSTMRNQARITVLRARDNLILELLKDAKMRLSRIVSDEEIYQDLLDKLVLQALLRLLEPVMIVRCRPQDLHLVESAVLRAIPQYMRLCQKHLEVQVDQTEHLPSNAAGGVEVYSSDQKIKVSNTLESRLNLAAMQKMPEIRGILFGDNTSRKFFT.

This sequence belongs to the V-ATPase E subunit family. In terms of assembly, V-ATPase is a heteromultimeric enzyme made up of two complexes: the ATP-hydrolytic V1 complex and the proton translocation V0 complex. The V1 complex consists of three catalytic AB heterodimers that form a heterohexamer, three peripheral stalks each consisting of EG heterodimers, one central rotor including subunits D and F, and the regulatory subunits C and H. The proton translocation complex V0 consists of the proton transport subunit a, a ring of proteolipid subunits c9c'', rotary subunit d, subunits e and f, and the accessory subunits ATP6AP1/Ac45 and ATP6AP2/PRR. In terms of tissue distribution, testis specific.

Functionally, subunit of the V1 complex of vacuolar(H+)-ATPase (V-ATPase), a multisubunit enzyme composed of a peripheral complex (V1) that hydrolyzes ATP and a membrane integral complex (V0) that translocates protons. V-ATPase is responsible for acidifying and maintaining the pH of intracellular compartments and in some cell types, is targeted to the plasma membrane, where it is responsible for acidifying the extracellular environment. The polypeptide is V-type proton ATPase subunit E 2 (Atp6v1e2) (Mus musculus (Mouse)).